We begin with the raw amino-acid sequence, 285 residues long: ATP phosphoribosyltransferase (285 aa).

Belongs to the ATP phosphoribosyltransferase family. Long subfamily. It depends on Mg(2+) as a cofactor.

Its subcellular location is the cytoplasm. It carries out the reaction 1-(5-phospho-beta-D-ribosyl)-ATP + diphosphate = 5-phospho-alpha-D-ribose 1-diphosphate + ATP. Its pathway is amino-acid biosynthesis; L-histidine biosynthesis; L-histidine from 5-phospho-alpha-D-ribose 1-diphosphate: step 1/9. With respect to regulation, feedback inhibited by histidine. Its function is as follows. Catalyzes the condensation of ATP and 5-phosphoribose 1-diphosphate to form N'-(5'-phosphoribosyl)-ATP (PR-ATP). Has a crucial role in the pathway because the rate of histidine biosynthesis seems to be controlled primarily by regulation of HisG enzymatic activity. This Sulfurisphaera tokodaii (strain DSM 16993 / JCM 10545 / NBRC 100140 / 7) (Sulfolobus tokodaii) protein is ATP phosphoribosyltransferase.